A 399-amino-acid polypeptide reads, in one-letter code: Leu/Ile/Val-binding protein homolog 7 (399 aa).

An N-terminal signal peptide occupies residues 1–22; it reads MEKHLIALSVAALLAGAAPASA.

Belongs to the leucine-binding protein family.

In terms of biological role, component of an amino-acid transport system. The polypeptide is Leu/Ile/Val-binding protein homolog 7 (Brucella melitensis biotype 1 (strain ATCC 23456 / CCUG 17765 / NCTC 10094 / 16M)).